A 215-amino-acid chain; its full sequence is Beta-crystallin A3 (215 aa).

An N-acetylmethionine modification is found at methionine 1. The disordered stretch occupies residues 1-24 (METQTVQQELESLPTTKMAQTNPM). Positions 1 to 30 (METQTVQQELESLPTTKMAQTNPMPGSVGP) are N-terminal arm. Residue glutamate 2 is modified to N-acetylalanine. 2 consecutive Beta/gamma crystallin 'Greek key' domains span residues 31–70 (WKITIYDQENFQGKRMEFTSSCPNVSERNFDNVRSLKVEC) and 71–117 (GAWV…RPIC). 2 positions are modified to S-glutathionyl cysteine; alternate: cysteine 82 and cysteine 117. Cysteine 82 and cysteine 117 each carry S-methylcysteine; alternate. The interval 118-123 (SANHKE) is connecting peptide. 2 Beta/gamma crystallin 'Greek key' domains span residues 124–165 (SKIT…KIQC) and 166–214 (GAWV…RRIQ).

The protein belongs to the beta/gamma-crystallin family. In terms of assembly, homo/heterodimer, or complexes of higher-order. The structure of beta-crystallin oligomers seems to be stabilized through interactions between the N-terminal arms. Interacts with CRYBA1. In terms of processing, specific cleavages in the N-terminal arm occur during lens maturation and give rise to several truncated forms. Post-translationally, isoform A1 contains a N-acetylalanine at position 2.

Its function is as follows. Crystallins are the dominant structural components of the vertebrate eye lens. In Bos taurus (Bovine), this protein is Beta-crystallin A3.